Reading from the N-terminus, the 206-residue chain is Small ribosomal subunit protein uS4 (206 aa).

An S4 RNA-binding domain is found at T96–K156.

This sequence belongs to the universal ribosomal protein uS4 family. As to quaternary structure, part of the 30S ribosomal subunit. Contacts protein S5. The interaction surface between S4 and S5 is involved in control of translational fidelity.

One of the primary rRNA binding proteins, it binds directly to 16S rRNA where it nucleates assembly of the body of the 30S subunit. Functionally, with S5 and S12 plays an important role in translational accuracy. The sequence is that of Small ribosomal subunit protein uS4 from Shewanella sp. (strain MR-4).